Reading from the N-terminus, the 1183-residue chain is Chromosome partition protein Smc (1183 aa).

Position 32–39 (32–39 (PNGCGKTN)) interacts with ATP. Coiled-coil stretches lie at residues 167 to 322 (ITRY…ERLN) and 358 to 497 (AEFE…ALCN). The interval 409–442 (KEHLEGSVNRLDQRKRDLERSMEQAEPERRRTSE) is disordered. A compositionally biased stretch (basic and acidic residues) spans 419-442 (LDQRKRDLERSMEQAEPERRRTSE). The SMC hinge domain occupies 523–632 (LGCLSDLISV…VADLDAAEQL (110 aa)). 2 coiled-coil regions span residues 669–941 (GKKA…VMER) and 980–1025 (NELA…ALEK).

This sequence belongs to the SMC family. As to quaternary structure, homodimer.

Its subcellular location is the cytoplasm. Functionally, required for chromosome condensation and partitioning. This Chlorobaculum tepidum (strain ATCC 49652 / DSM 12025 / NBRC 103806 / TLS) (Chlorobium tepidum) protein is Chromosome partition protein Smc.